We begin with the raw amino-acid sequence, 105 residues long: Thioredoxin (105 aa).

Residues 2–105 (VKQIESKTAF…KLEATINELV (104 aa)) form the Thioredoxin domain. Position 3 is an N6-acetyllysine (K3). The residue at position 8 (K8) is an N6-succinyllysine. Catalysis depends on nucleophile residues C32 and C35. A disulfide bridge links C32 with C35. K39 carries the N6-acetyllysine modification. S-nitrosocysteine is present on residues C62 and C69. The residue at position 73 (C73) is an S-nitrosocysteine; alternate. K94 is modified (N6-acetyllysine; alternate). An N6-succinyllysine; alternate modification is found at K94.

This sequence belongs to the thioredoxin family. Homodimer; disulfide-linked. Interacts with TXNIP through the redox-active site. Interacts with MAP3K5 and CASP3. In case of infection, interacts with S.typhimurium protein slrP. Interacts with APEX1; the interaction stimulates the FOS/JUN AP-1 DNA-binding activity in a redox-dependent manner. In terms of processing, in the fully reduced protein, both Cys-69 and Cys-73 are nitrosylated in response to nitric oxide (NO). When two disulfide bonds are present in the protein, only Cys-73 is nitrosylated. Cys-73 can serve as donor for nitrosylation of target proteins. Post-translationally, in case of infection, ubiquitinated by S.typhimurium protein slrP, leading to its degradation.

Its subcellular location is the nucleus. The protein localises to the cytoplasm. It is found in the secreted. Its function is as follows. Participates in various redox reactions through the reversible oxidation of its active center dithiol to a disulfide and catalyzes dithiol-disulfide exchange reactions. Plays a role in the reversible S-nitrosylation of cysteine residues in target proteins, and thereby contributes to the response to intracellular nitric oxide. Nitrosylates the active site Cys of CASP3 in response to nitric oxide (NO), and thereby inhibits caspase-3 activity. Induces the FOS/JUN AP-1 DNA-binding activity in ionizing radiation (IR) cells through its oxidation/reduction status and stimulates AP-1 transcriptional activity. ADF augments the expression of the interleukin-2 receptor TAC (IL2R/P55). The chain is Thioredoxin (TXN) from Homo sapiens (Human).